The sequence spans 346 residues: tRNA N6-adenosine threonylcarbamoyltransferase (346 aa).

Residues His111 and His115 each contribute to the Fe cation site. Substrate contacts are provided by residues 134–138 (LVSGG), Asp167, Gly180, and Asn279. Asp307 is a Fe cation binding site.

This sequence belongs to the KAE1 / TsaD family. It depends on Fe(2+) as a cofactor.

The protein resides in the cytoplasm. The enzyme catalyses L-threonylcarbamoyladenylate + adenosine(37) in tRNA = N(6)-L-threonylcarbamoyladenosine(37) in tRNA + AMP + H(+). Functionally, required for the formation of a threonylcarbamoyl group on adenosine at position 37 (t(6)A37) in tRNAs that read codons beginning with adenine. Is involved in the transfer of the threonylcarbamoyl moiety of threonylcarbamoyl-AMP (TC-AMP) to the N6 group of A37, together with TsaE and TsaB. TsaD likely plays a direct catalytic role in this reaction. The protein is tRNA N6-adenosine threonylcarbamoyltransferase of Burkholderia cenocepacia (strain HI2424).